The sequence spans 117 residues: Large ribosomal subunit protein uL18 (117 aa).

The protein belongs to the universal ribosomal protein uL18 family. In terms of assembly, part of the 50S ribosomal subunit; part of the 5S rRNA/L5/L18/L25 subcomplex. Contacts the 5S and 23S rRNAs.

Its function is as follows. This is one of the proteins that bind and probably mediate the attachment of the 5S RNA into the large ribosomal subunit, where it forms part of the central protuberance. In Haemophilus ducreyi (strain 35000HP / ATCC 700724), this protein is Large ribosomal subunit protein uL18.